A 480-amino-acid chain; its full sequence is Aspartyl/glutamyl-tRNA(Asn/Gln) amidotransferase subunit B (480 aa).

Belongs to the GatB/GatE family. GatB subfamily. As to quaternary structure, heterotrimer of A, B and C subunits.

The enzyme catalyses L-glutamyl-tRNA(Gln) + L-glutamine + ATP + H2O = L-glutaminyl-tRNA(Gln) + L-glutamate + ADP + phosphate + H(+). It catalyses the reaction L-aspartyl-tRNA(Asn) + L-glutamine + ATP + H2O = L-asparaginyl-tRNA(Asn) + L-glutamate + ADP + phosphate + 2 H(+). Functionally, allows the formation of correctly charged Asn-tRNA(Asn) or Gln-tRNA(Gln) through the transamidation of misacylated Asp-tRNA(Asn) or Glu-tRNA(Gln) in organisms which lack either or both of asparaginyl-tRNA or glutaminyl-tRNA synthetases. The reaction takes place in the presence of glutamine and ATP through an activated phospho-Asp-tRNA(Asn) or phospho-Glu-tRNA(Gln). In Streptococcus thermophilus (strain ATCC BAA-491 / LMD-9), this protein is Aspartyl/glutamyl-tRNA(Asn/Gln) amidotransferase subunit B.